Consider the following 398-residue polypeptide: RNA-binding protein rnc1 (398 aa).

The interval 40–78 (KVSIPTPKPSTPLSTLTNGSTIQQSMTNQPEPTSQVPPI) is disordered. Threonine 50 carries the phosphothreonine modification. Polar residues predominate over residues 57–76 (NGSTIQQSMTNQPEPTSQVP). KH domains lie at 93 to 157 (QLTL…YRFI) and 178 to 243 (PRKL…IWEI). The segment covering 274-290 (ASTASPQQVSPPAAPST) has biased composition (low complexity). Residues 274 to 295 (ASTASPQQVSPPAAPSTTSGEA) form a disordered region. Residues 320–385 (KVTQNISIPA…EENEKALFLL (66 aa)) form the KH 3 domain.

Phosphorylated by pmk1. Phosphorylation causes enhancement of the RNA-binding activity.

Its subcellular location is the cytoplasm. In terms of biological role, binds and stabilizes pmp1 mRNA and hence acts as a negative regulator of pmk1 signaling. Overexpression suppresses the Cl(-) sensitivity of calcineurin deletion. The polypeptide is RNA-binding protein rnc1 (Schizosaccharomyces pombe (strain 972 / ATCC 24843) (Fission yeast)).